Consider the following 823-residue polypeptide: Leucine--tRNA ligase (823 aa).

The 'HIGH' region motif lies at 42-52; it reads PYPSGTLHMGH. A 'KMSKS' region motif is present at residues 575–579; it reads KMSKS. K578 is an ATP binding site.

The protein belongs to the class-I aminoacyl-tRNA synthetase family.

It localises to the cytoplasm. It carries out the reaction tRNA(Leu) + L-leucine + ATP = L-leucyl-tRNA(Leu) + AMP + diphosphate. The protein is Leucine--tRNA ligase of Legionella pneumophila (strain Lens).